Reading from the N-terminus, the 1172-residue chain is Phytochrome B (1172 aa).

Positions 1 to 16 are enriched in gly residues; sequence MVSGVGGSGGGRGGGR. Positions 1–54 are disordered; it reads MVSGVGGSGGGRGGGRGGEEEPSSSHTPNNRRGGEQAQSSGTKSLRPRSNTESM. Residues 24–54 show a composition bias toward polar residues; sequence SSHTPNNRRGGEQAQSSGTKSLRPRSNTESM. Residues 252 to 433 form the GAF domain; it reads DIKLLCDTVV…AFGLQLNMEL (182 aa). C357 is a binding site for phytochromobilin. PAS domains lie at 652–723 and 786–857; these read VARE…LRGD and DYKA…MIVL. Residues 934–1153 enclose the Histidine kinase domain; sequence YICQVIKNPL…LIILELPVPR (220 aa).

It belongs to the phytochrome family. As to quaternary structure, homodimer. Interacts with ADO1 and PKS4. Stabilized by interactions with PAPP5 and FYPP3 which are enhanced in the phosphorylated Pfr form. Interacts with VOZ1 and VOZ2. Binds, via its photosensory domain, to PTAC12/HMR/PAP5 when photoactivated; this interaction stimulates its localization to photobodies. Interacts with CRY1 specifically when in the dark/far-red (Pr) state, but not when red light-activated (Pfr). Interacts with PIF4 and PIF5 in response to low blue light (LBL). Component of a red light-dependent nuclear complex made of PHL, PHYB and CO. Interacts directly with PHL. Binds to UNE10/PIF8 when red light-activated (Pfr). When light-activated, interacts with PCH1 and PCHL. Associated with DRT111/RSN2/SFPS, SMP2 and SWAP1 in nuclear photobodies upon response to red light (Pfr form). In terms of processing, contains one covalently linked phytochromobilin chromophore. Expressed in fruits, flowers, leaves, stems, seedlings and roots.

It is found in the cytoplasm. The protein resides in the nucleus. It localises to the nucleoplasm. The protein localises to the nucleus speckle. Regulatory photoreceptor which exists in two forms that are reversibly interconvertible by light: the Pr form that absorbs maximally in the red region of the spectrum and the Pfr form that absorbs maximally in the far-red region. Photoconversion of Pr to Pfr induces an array of morphogenetic responses, whereas reconversion of Pfr to Pr cancels the induction of those responses. Pfr controls the expression of a number of nuclear genes including those encoding the small subunit of ribulose-bisphosphate carboxylase, chlorophyll A/B binding protein, protochlorophyllide reductase, rRNA, etc. It also controls the expression of its own gene(s) in a negative feedback fashion. Involved in the flowering time regulation. Involved in light-regulated circadian phase control that triggers stomatal aperture, stomatal conductance, and CO(2) assimilation. Implicated in red light perception, and, to a lower extent, in blue light signaling. Controls thermomorphogenesis in the daytime and regulates temperature responses by associating with the promoters of key target genes in a temperature-dependent manner and subsequently repressing their expression in a PIF4-dependent manner (temperature-responsive transcriptional regulator); this process requires PTAC12/HMR/PAP5 (transcriptional activator). Thermal timer that integrates temperature information over the course of the night. Detabilizes UNE10/PIF8 in red light. The protein is Phytochrome B of Arabidopsis thaliana (Mouse-ear cress).